The sequence spans 367 residues: Putrescine/agmatine-binding protein (367 aa).

A signal peptide spans 1–19 (MKKVCALALSILTTIGATA).

Belongs to the bacterial solute-binding protein 1 family.

The protein resides in the periplasm. In terms of biological role, binds putrescine and agmatine. This chain is Putrescine/agmatine-binding protein, found in Pseudomonas aeruginosa (strain ATCC 15692 / DSM 22644 / CIP 104116 / JCM 14847 / LMG 12228 / 1C / PRS 101 / PAO1).